Consider the following 134-residue polypeptide: UPF0412 protein YaaI (134 aa).

A signal peptide spans 1–23 (MKSVFTISASLAISLMLCCTAQA).

It belongs to the UPF0412 family.

This Escherichia coli O157:H7 protein is UPF0412 protein YaaI.